Here is a 509-residue protein sequence, read N- to C-terminus: Autophagy-related protein 16 (509 aa).

WD repeat units lie at residues 223 to 262, 265 to 304, 307 to 347, 349 to 388, 391 to 430, 437 to 478, and 480 to 509; these read AHEG…LIKS, GSLG…VRHT, GHTD…CTNT, LFTS…LLSE, GHSS…ICGT, RLAS…SILK, and QTSP…CTWT.

This sequence belongs to the WD repeat ATG16 family.

In terms of biological role, may play a role in autophagy. The polypeptide is Autophagy-related protein 16 (Arabidopsis thaliana (Mouse-ear cress)).